The primary structure comprises 171 residues: Neuronal vesicle trafficking-associated protein 2 (171 aa).

The interval 1-21 (MVKLNSNPSEKGAKPPSVEDG) is disordered. Over 1-71 (MVKLNSNPSE…FRVPKIAEFT (71 aa)) the chain is Cytoplasmic. Residues 72 to 92 (VTILVSLALAFLACIVFLVVY) form a helical; Signal-anchor for type II membrane protein membrane-spanning segment. At 93 to 171 (KAFTYDHSCP…EPKPPKTQGH (79 aa)) the chain is on the lumenal side.

The protein belongs to the NSG family.

It localises to the membrane. The protein localises to the golgi apparatus. Its subcellular location is the trans-Golgi network membrane. The protein resides in the cell projection. It is found in the dendrite. It localises to the endosome membrane. The protein localises to the early endosome membrane. Its subcellular location is the late endosome membrane. The protein resides in the lysosome lumen. It is found in the cytoplasmic vesicle membrane. It localises to the golgi stack membrane. The protein localises to the endosome. Its subcellular location is the multivesicular body membrane. The sequence is that of Neuronal vesicle trafficking-associated protein 2 from Bos taurus (Bovine).